We begin with the raw amino-acid sequence, 638 residues long: 1,4-alpha-glucan branching enzyme GlgB (638 aa).

Residue D303 is the Nucleophile of the active site. E356 serves as the catalytic Proton donor.

The protein belongs to the glycosyl hydrolase 13 family. GlgB subfamily. Monomer.

The enzyme catalyses Transfers a segment of a (1-&gt;4)-alpha-D-glucan chain to a primary hydroxy group in a similar glucan chain.. It functions in the pathway glycan biosynthesis; glycogen biosynthesis. Catalyzes the formation of the alpha-1,6-glucosidic linkages in glycogen by scission of a 1,4-alpha-linked oligosaccharide from growing alpha-1,4-glucan chains and the subsequent attachment of the oligosaccharide to the alpha-1,6 position. The chain is 1,4-alpha-glucan branching enzyme GlgB from Lactobacillus acidophilus (strain ATCC 700396 / NCK56 / N2 / NCFM).